Consider the following 384-residue polypeptide: 8-amino-7-oxononanoate synthase (384 aa).

Position 21 (R21) interacts with substrate. 108-109 (GF) contributes to the pyridoxal 5'-phosphate binding site. H133 contacts substrate. 3 residues coordinate pyridoxal 5'-phosphate: S179, H207, and T233. K236 is modified (N6-(pyridoxal phosphate)lysine). T352 provides a ligand contact to substrate.

The protein belongs to the class-II pyridoxal-phosphate-dependent aminotransferase family. BioF subfamily. In terms of assembly, homodimer. Pyridoxal 5'-phosphate is required as a cofactor.

It catalyses the reaction 6-carboxyhexanoyl-[ACP] + L-alanine + H(+) = (8S)-8-amino-7-oxononanoate + holo-[ACP] + CO2. It participates in cofactor biosynthesis; biotin biosynthesis. Catalyzes the decarboxylative condensation of pimeloyl-[acyl-carrier protein] and L-alanine to produce 8-amino-7-oxononanoate (AON), [acyl-carrier protein], and carbon dioxide. This is 8-amino-7-oxononanoate synthase from Escherichia coli (strain K12 / DH10B).